A 139-amino-acid chain; its full sequence is Large ribosomal subunit protein uL16 (139 aa).

It belongs to the universal ribosomal protein uL16 family. As to quaternary structure, part of the 50S ribosomal subunit.

In terms of biological role, binds 23S rRNA and is also seen to make contacts with the A and possibly P site tRNAs. This chain is Large ribosomal subunit protein uL16 (rplP), found in Neorickettsia sennetsu (strain ATCC VR-367 / Miyayama) (Ehrlichia sennetsu).